A 755-amino-acid chain; its full sequence is Polyribonucleotide nucleotidyltransferase (755 aa).

Residues aspartate 527 and aspartate 533 each contribute to the Mg(2+) site. Positions 593-652 (PRITTIKVPVDKIGEVIGPKGKMINSITEETGANISIEDDGTVFVGAADGASAQAAIDKI) constitute a KH domain. The region spanning 664–733 (GERFLGTVVK…NRGKISLVPV (70 aa)) is the S1 motif domain. The interval 734–755 (GEEDAAEAPAPAEAQPADAVTQ) is disordered. Over residues 740–755 (EAPAPAEAQPADAVTQ) the composition is skewed to low complexity.

The protein belongs to the polyribonucleotide nucleotidyltransferase family. It depends on Mg(2+) as a cofactor.

The protein resides in the cytoplasm. It carries out the reaction RNA(n+1) + phosphate = RNA(n) + a ribonucleoside 5'-diphosphate. Functionally, involved in mRNA degradation. Catalyzes the phosphorolysis of single-stranded polyribonucleotides processively in the 3'- to 5'-direction. This is Polyribonucleotide nucleotidyltransferase from Mycobacteroides abscessus (strain ATCC 19977 / DSM 44196 / CCUG 20993 / CIP 104536 / JCM 13569 / NCTC 13031 / TMC 1543 / L948) (Mycobacterium abscessus).